The primary structure comprises 304 residues: Voltage-dependent anion channel-forming protein YneE (304 aa).

The next 4 membrane-spanning stretches (helical) occupy residues 28 to 48 (LLLN…YTHL), 50 to 70 (IKFT…FLGF), 194 to 214 (VLAG…TLIL), and 220 to 240 (LFCI…TPFI).

It belongs to the anion channel-forming bestrophin (TC 1.A.46) family.

The protein localises to the cell membrane. In Escherichia coli O157:H7, this protein is Voltage-dependent anion channel-forming protein YneE (yneE).